A 153-amino-acid polypeptide reads, in one-letter code: Probable disulfide formation protein (153 aa).

The chain crosses the membrane as a helical span at residues 4–23; the sequence is DTRLYLAWLVALAATLGSLY. An intrachain disulfide couples cysteine 33 to cysteine 36. The next 2 helical transmembrane spans lie at 38–57 and 64–81; these read AQRIFMYPLAVILGIAAFVG and YVLPLAALGLGFAIFQNL. An intrachain disulfide couples cysteine 93 to cysteine 101. Residues 117 to 139 traverse the membrane as a helical segment; that stretch reads RALTIPVLSMIAFALILALLSWP.

This sequence belongs to the DsbB family. BdbC subfamily.

It localises to the cell membrane. Its function is as follows. Required for disulfide bond formation in some proteins. The sequence is that of Probable disulfide formation protein from Deinococcus radiodurans (strain ATCC 13939 / DSM 20539 / JCM 16871 / CCUG 27074 / LMG 4051 / NBRC 15346 / NCIMB 9279 / VKM B-1422 / R1).